A 718-amino-acid chain; its full sequence is Protein Smaug homolog 1 (718 aa).

Ser-168 bears the Phosphoserine mark. 3 disordered regions span residues 278–323 (ARGP…EEGS), 416–474 (KAYS…LQPH), and 572–601 (NRGF…QYQI). Residues 323-391 (SGMKDVPAWL…ERQNLLKSLE (69 aa)) enclose the SAM domain. Residue Ser-420 is modified to Phosphoserine. Thr-424 carries the post-translational modification Phosphothreonine. Residues 453 to 466 (GAAATGATATPSAG) are compositionally biased toward low complexity. Omega-N-methylarginine is present on Arg-573. Position 580 is a phosphoserine (Ser-580).

This sequence belongs to the SMAUG family.

The protein resides in the cytoplasm. The protein localises to the cell projection. It localises to the dendrite. Its subcellular location is the synapse. It is found in the synaptosome. Its function is as follows. Acts as a translational repressor of SRE-containing messengers. This is Protein Smaug homolog 1 (SAMD4A) from Homo sapiens (Human).